The chain runs to 952 residues: Pentatricopeptide repeat-containing protein At5g04810, chloroplastic (952 aa).

A chloroplast-targeting transit peptide spans 1-60 (MDNGGSVLSLSAPHFPYSATILRRHSPVASISFSLKQPPPQPPEPPESPPDLRRPEKSIG). Disordered regions lie at residues 30–95 (SISF…VSPL) and 115–163 (LRLS…EFRQ). Over residues 37-49 (QPPPQPPEPPESP) the composition is skewed to pro residues. Low complexity predominate over residues 58–68 (SIGSSSSSSSP). Over residues 122-133 (SPPPPPPPPPPV) the composition is skewed to pro residues. Basic and acidic residues predominate over residues 137–163 (TQFRDEFRSDTKPPEEETRNPQQEFRQ). The RRM domain maps to 167-238 (IFVGNLPTWI…VEFHGRILTV (72 aa)). Over residues 259–280 (EGEEDTKMSNKSSWHQEREGSR) the composition is skewed to basic and acidic residues. Residues 259–281 (EGEEDTKMSNKSSWHQEREGSRK) form a disordered region. PPR repeat units follow at residues 308–342 (SRTEFGLMVKFYGRRGDMHRARETFERMRARGITP), 343–377 (TSRIYTSLIHAYAVGRDMDEALSCVRKMKEEGIEM), 378–412 (SLVTYSVIVGGFSKAGHAEAADYWFDEAKRIHKTL), 413–447 (NASIYGKIIYAHCQTCNMERAEALVREMEEEGIDA), 448–482 (PIAIYHTMMDGYTMVADEKKGLVVFKRLKECGFTP), 483–517 (TVVTYGCLINLYTKVGKISKALEVSRVMKEEGVKH), 518–552 (NLKTYSMMINGFVKLKDWANAFAVFEDMVKEGMKP), 553–587 (DVILYNNIISAFCGMGNMDRAIQTVKEMQKLRHRP), 588–622 (TTRTFMPIIHGYAKSGDMRRSLEVFDMMRRCGCVP), 623–657 (TVHTFNGLINGLVEKRQMEKAVEILDEMTLAGVSA), 658–692 (NEHTYTKIMQGYASVGDTGKAFEYFTRLQNEGLDV), 693–727 (DIFTYEALLKACCKSGRMQSALAVTKEMSARNIPR), 728–762 (NSFVYNILIDGWARRGDVWEAADLIQQMKKEGVKP), 763–797 (DIHTYTSFISACSKAGDMNRATQTIEEMEALGVKP), and 798–832 (NIKTYTTLIKGWARASLPEKALSCYEEMKAMGIKP). The interval 918–952 (DQVSDVDSDEDDVDGEDGEDDEDVNSVSDLLSPYK) is disordered. The span at 921–941 (SDVDSDEDDVDGEDGEDDEDV) shows a compositional bias: acidic residues.

Belongs to the PPR family. P subfamily.

It is found in the plastid. The protein localises to the chloroplast. Functionally, may play a role in the plastid ribosome biogenesis. In Arabidopsis thaliana (Mouse-ear cress), this protein is Pentatricopeptide repeat-containing protein At5g04810, chloroplastic (PPR4).